Consider the following 205-residue polypeptide: Large ribosomal subunit protein uL4 (205 aa).

The tract at residues 43–96 (GKRQGTSKVKNRSAVRGGGKKPWRQKGTGRARQGSIRSPQWRGGGTVFGPTPRS) is disordered. Residues 51 to 71 (VKNRSAVRGGGKKPWRQKGTG) show a composition bias toward basic residues.

Belongs to the universal ribosomal protein uL4 family. Part of the 50S ribosomal subunit.

One of the primary rRNA binding proteins, this protein initially binds near the 5'-end of the 23S rRNA. It is important during the early stages of 50S assembly. It makes multiple contacts with different domains of the 23S rRNA in the assembled 50S subunit and ribosome. In terms of biological role, forms part of the polypeptide exit tunnel. In Lactobacillus helveticus (strain DPC 4571), this protein is Large ribosomal subunit protein uL4.